The sequence spans 355 residues: 3-dehydroquinate synthase (355 aa).

Residues 71–76, 105–109, 129–130, lysine 142, and lysine 151 each bind NAD(+); these read EGEERK, GVVGD, and TS. 3 residues coordinate Zn(2+): glutamate 184, histidine 246, and histidine 263.

The protein belongs to the sugar phosphate cyclases superfamily. Dehydroquinate synthase family. Requires Co(2+) as cofactor. Zn(2+) serves as cofactor. NAD(+) is required as a cofactor.

It localises to the cytoplasm. It carries out the reaction 7-phospho-2-dehydro-3-deoxy-D-arabino-heptonate = 3-dehydroquinate + phosphate. The protein operates within metabolic intermediate biosynthesis; chorismate biosynthesis; chorismate from D-erythrose 4-phosphate and phosphoenolpyruvate: step 2/7. Functionally, catalyzes the conversion of 3-deoxy-D-arabino-heptulosonate 7-phosphate (DAHP) to dehydroquinate (DHQ). This chain is 3-dehydroquinate synthase, found in Streptococcus pneumoniae (strain JJA).